The following is a 308-amino-acid chain: Acetylglutamate kinase (308 aa).

Substrate-binding positions include 73–74, arginine 95, and asparagine 194; that span reads GG.

It belongs to the acetylglutamate kinase family. ArgB subfamily.

It is found in the cytoplasm. The catalysed reaction is N-acetyl-L-glutamate + ATP = N-acetyl-L-glutamyl 5-phosphate + ADP. The protein operates within amino-acid biosynthesis; L-arginine biosynthesis; N(2)-acetyl-L-ornithine from L-glutamate: step 2/4. Catalyzes the ATP-dependent phosphorylation of N-acetyl-L-glutamate. In Rhodococcus jostii (strain RHA1), this protein is Acetylglutamate kinase.